Consider the following 174-residue polypeptide: Small ribosomal subunit protein uS5 (174 aa).

Residues 18 to 81 (LKDRLVSVNR…EDAKKNLVKI (64 aa)) enclose the S5 DRBM domain.

The protein belongs to the universal ribosomal protein uS5 family. Part of the 30S ribosomal subunit. Contacts proteins S4 and S8.

Functionally, with S4 and S12 plays an important role in translational accuracy. In terms of biological role, located at the back of the 30S subunit body where it stabilizes the conformation of the head with respect to the body. In Flavobacterium psychrophilum (strain ATCC 49511 / DSM 21280 / CIP 103535 / JIP02/86), this protein is Small ribosomal subunit protein uS5.